The sequence spans 381 residues: Probable serine/threonine-protein kinase PBL21 (381 aa).

The S-palmitoyl cysteine moiety is linked to residue C3. A Protein kinase domain is found at 78-354 (FREVNLLGEG…GDIVVALEYL (277 aa)). ATP-binding positions include 84–92 (LGEGGFGRV) and K106. Catalysis depends on D204, which acts as the Proton acceptor. A disordered region spans residues 362–381 (EARNVSSPSPEISRTPRRDL).

Belongs to the protein kinase superfamily. Ser/Thr protein kinase family. Palmitoylation at Cys-3 and Cys-7 are required for plasma membrane location.

It localises to the cell membrane. The enzyme catalyses L-seryl-[protein] + ATP = O-phospho-L-seryl-[protein] + ADP + H(+). The catalysed reaction is L-threonyl-[protein] + ATP = O-phospho-L-threonyl-[protein] + ADP + H(+). Functionally, may be involved in plant defense signaling. The polypeptide is Probable serine/threonine-protein kinase PBL21 (Arabidopsis thaliana (Mouse-ear cress)).